The chain runs to 215 residues: HTH-type transcriptional repressor FabR (215 aa).

One can recognise an HTH tetR-type domain in the interval 10-70 (KTRRSLVEAA…TMVDESGLML (61 aa)). A DNA-binding region (H-T-H motif) is located at residues 33–52 (SLREVAREAGIAPTSFYRHF).

Homodimer.

It localises to the cytoplasm. Represses the transcription of fabB, involved in unsaturated fatty acid (UFA) biosynthesis. By controlling UFA production, FabR directly influences the physical properties of the membrane bilayer. In Escherichia coli O9:H4 (strain HS), this protein is HTH-type transcriptional repressor FabR.